Consider the following 254-residue polypeptide: Vitamin B12 import ATP-binding protein BtuD (254 aa).

The ABC transporter domain occupies 3–239 (INYISVGNRL…ENLQQVFETP (237 aa)). 29–36 (GPNGSGKS) contacts ATP.

This sequence belongs to the ABC transporter superfamily. Vitamin B12 importer (TC 3.A.1.13.1) family. As to quaternary structure, the complex is composed of two ATP-binding proteins (BtuD), two transmembrane proteins (BtuC) and a solute-binding protein (BtuF).

Its subcellular location is the cell inner membrane. It carries out the reaction an R-cob(III)alamin(out) + ATP + H2O = an R-cob(III)alamin(in) + ADP + phosphate + H(+). Its function is as follows. Part of the ABC transporter complex BtuCDF involved in vitamin B12 import. Responsible for energy coupling to the transport system. This chain is Vitamin B12 import ATP-binding protein BtuD, found in Vibrio vulnificus (strain CMCP6).